The sequence spans 124 residues: Small ribosomal subunit protein uS12 (124 aa).

Aspartate 89 carries the 3-methylthioaspartic acid modification. Positions glutamine 105–serine 124 are disordered. The span at lysine 108–glycine 118 shows a compositional bias: basic residues.

This sequence belongs to the universal ribosomal protein uS12 family. As to quaternary structure, part of the 30S ribosomal subunit. Contacts proteins S8 and S17. May interact with IF1 in the 30S initiation complex.

Functionally, with S4 and S5 plays an important role in translational accuracy. Interacts with and stabilizes bases of the 16S rRNA that are involved in tRNA selection in the A site and with the mRNA backbone. Located at the interface of the 30S and 50S subunits, it traverses the body of the 30S subunit contacting proteins on the other side and probably holding the rRNA structure together. The combined cluster of proteins S8, S12 and S17 appears to hold together the shoulder and platform of the 30S subunit. This is Small ribosomal subunit protein uS12 from Mycobacterium leprae (strain Br4923).